A 783-amino-acid polypeptide reads, in one-letter code: BMP/retinoic acid-inducible neural-specific protein 2 (783 aa).

Positions 1–33 are cleaved as a signal peptide; it reads MRWPCSSRFRGLWPEAAPWAVLLALGVPGWVLA. Residues 85 to 281 enclose the MACPF domain; the sequence is RYRIYREFAR…FVAAALSYIT (197 aa). 6 N-linked (GlcNAc...) asparagine glycosylation sites follow: Asn-185, Asn-354, Asn-473, Asn-579, Asn-626, and Asn-658.

It belongs to the BRINP family. As to expression, expressed in olfactory bulb, cerebellum and neuronal layers in hippocampus.

It is found in the secreted. Functionally, inhibits neuronal cell proliferation by negative regulation of the cell cycle transition. The polypeptide is BMP/retinoic acid-inducible neural-specific protein 2 (Brinp2) (Rattus norvegicus (Rat)).